Consider the following 444-residue polypeptide: Phosphatidate cytidylyltransferase 2 (444 aa).

Residues 1–38 show a composition bias toward basic and acidic residues; it reads MTELRQRVVREDAPPEDKESESEAKLDGETASDSESRA. A disordered region spans residues 1 to 48; that stretch reads MTELRQRVVREDAPPEDKESESEAKLDGETASDSESRAETAPLPTSVD. S20 bears the Phosphoserine mark. Residue T30 is modified to Phosphothreonine. 3 positions are modified to phosphoserine: S32, S34, and S36. T50 is modified (phosphothreonine). The next 6 helical transmembrane spans lie at 78–98, 129–149, 165–185, 212–232, 261–281, and 339–359; these read MIAF…MIVM, WYFL…DYFF, HRFI…LSLV, LVIH…SCVI, GFIG…YVMS, and IALS…ASGF.

This sequence belongs to the CDS family. In terms of assembly, homodimer. As to expression, ubiquitous. Expressed in the ganglion cell layer and inner nuclear layer of the retina.

The protein resides in the endoplasmic reticulum membrane. It carries out the reaction a 1,2-diacyl-sn-glycero-3-phosphate + CTP + H(+) = a CDP-1,2-diacyl-sn-glycerol + diphosphate. The enzyme catalyses 1-octadecanoyl-2-(5Z,8Z,11Z,14Z-eicosatetraenoyl)-sn-glycero-3-phosphate + CTP + H(+) = 1-octadecanoyl-2-(5Z,8Z,11Z,14Z-eicosatetraenoyl)-sn-glycero-3-cytidine-5'-diphosphate + diphosphate. It catalyses the reaction 1-octadecanoyl-2-(9Z,12Z-octadecadienoyl)-sn-glycero-3-phosphate + CTP + H(+) = 1-octadecanoyl-2-(9Z,12Z-octadecadienoyl)-sn-glycero-3-cytidine-5'-diphosphate + diphosphate. The catalysed reaction is 1-hexadecanoyl-2-(5Z,8Z,11Z,14Z-eicosatetraenoyl)-sn-glycero-3-phosphate + CTP + H(+) = 1-hexadecanoyl-2-(5Z,8Z,11Z,14Z-eicosatetraenoyl)-sn-glycero-3-cytidine-5'-diphosphate + diphosphate. It carries out the reaction 1,2-di-(5Z,8Z,11Z,14Z)-eicosatetraenoyl-sn-glycero-3-phosphate + CTP + H(+) = 1,2-di-(5Z,8Z,11Z,14Z-eicosatetraenoyl)-sn-glycero-3-cytidine-5'-diphosphate + diphosphate. The enzyme catalyses 1-octadecanoyl-2-(9Z-octadecenoyl)-sn-glycero-3-phosphate + CTP + H(+) = 1-octadecanoyl-2-(9Z-octadecenoyl)-sn-glycero-3-cytidine-5'-diphosphate + diphosphate. It catalyses the reaction 1-octadecanoyl-2-(4Z,7Z,10Z,13Z,16Z,19Z-docosahexaenoyl)-sn-glycero-3-phosphate + CTP + H(+) = 1-octadecanoyl-2-(4Z,7Z,10Z,13Z,16Z,19Z-docosahexaenoyl)-sn-glycero-3-cytidine-5'-diphosphate + diphosphate. The catalysed reaction is 1,2-di-(9Z,12Z-octadecadienoyl)-sn-glycero-3-phosphate + CTP + H(+) = 1,2-di-(9Z,12Z-octadecadienoyl)-sn-glycero-3-cytidine-5'-diphosphate + diphosphate. It carries out the reaction 1,2-di-(9Z-octadecenoyl)-sn-glycero-3-phosphate + CTP + H(+) = 1,2-di-(9Z-octadecenoyl)-sn-glycero-3-cytidine-5'-diphosphate + diphosphate. It participates in phospholipid metabolism; CDP-diacylglycerol biosynthesis; CDP-diacylglycerol from sn-glycerol 3-phosphate: step 3/3. In terms of biological role, catalyzes the conversion of phosphatidic acid (PA) to CDP-diacylglycerol (CDP-DAG), an essential intermediate in the synthesis of phosphatidylglycerol, cardiolipin and phosphatidylinositol. Exhibits specificity for the nature of the acyl chains at the sn-1 and sn-2 positions in the substrate, PA and the preferred acyl chain composition is 1-stearoyl-2-arachidonoyl-sn-phosphatidic acid. Plays an important role in regulating the growth and maturation of lipid droplets which are storage organelles at the center of lipid and energy homeostasis. The sequence is that of Phosphatidate cytidylyltransferase 2 from Mus musculus (Mouse).